The chain runs to 272 residues: Alcohol dehydrogenase-related 31 kDa protein (272 aa).

11–34 (YVADCGGIALETSKVLMTKNIAKL) provides a ligand contact to NAD(+). Serine 139 lines the substrate pocket. The active-site Proton acceptor is tyrosine 152.

This sequence belongs to the short-chain dehydrogenases/reductases (SDR) family.

In Drosophila melanogaster (Fruit fly), this protein is Alcohol dehydrogenase-related 31 kDa protein (Adhr).